The following is a 340-amino-acid chain: N-acetyl-gamma-glutamyl-phosphate reductase (340 aa).

The active site involves C148.

Belongs to the NAGSA dehydrogenase family. Type 1 subfamily.

The protein localises to the cytoplasm. It catalyses the reaction N-acetyl-L-glutamate 5-semialdehyde + phosphate + NADP(+) = N-acetyl-L-glutamyl 5-phosphate + NADPH + H(+). Its pathway is amino-acid biosynthesis; L-arginine biosynthesis; N(2)-acetyl-L-ornithine from L-glutamate: step 3/4. Functionally, catalyzes the NADPH-dependent reduction of N-acetyl-5-glutamyl phosphate to yield N-acetyl-L-glutamate 5-semialdehyde. The sequence is that of N-acetyl-gamma-glutamyl-phosphate reductase from Methanosarcina mazei (strain ATCC BAA-159 / DSM 3647 / Goe1 / Go1 / JCM 11833 / OCM 88) (Methanosarcina frisia).